A 290-amino-acid chain; its full sequence is Arylamine N-acetyltransferase 1 (290 aa).

Met-1 is subject to N-acetylmethionine. Ser-103 is a CoA binding site. Ile-106–His-107 lines the substrate pocket. Tyr-208 serves as a coordination point for CoA.

The protein belongs to the arylamine N-acetyltransferase family.

The protein resides in the cytoplasm. It catalyses the reaction an arylamine + acetyl-CoA = an N-acetylarylamine + CoA. In terms of biological role, participates in the detoxification of a plethora of hydrazine and arylamine drugs. This chain is Arylamine N-acetyltransferase 1 (NAT1), found in Bos taurus (Bovine).